The chain runs to 280 residues: Bifunctional protein FolD (280 aa).

NADP(+) is bound by residues 166–168 and S191; that span reads GRS.

This sequence belongs to the tetrahydrofolate dehydrogenase/cyclohydrolase family. As to quaternary structure, homodimer.

The enzyme catalyses (6R)-5,10-methylene-5,6,7,8-tetrahydrofolate + NADP(+) = (6R)-5,10-methenyltetrahydrofolate + NADPH. It catalyses the reaction (6R)-5,10-methenyltetrahydrofolate + H2O = (6R)-10-formyltetrahydrofolate + H(+). The protein operates within one-carbon metabolism; tetrahydrofolate interconversion. Catalyzes the oxidation of 5,10-methylenetetrahydrofolate to 5,10-methenyltetrahydrofolate and then the hydrolysis of 5,10-methenyltetrahydrofolate to 10-formyltetrahydrofolate. The sequence is that of Bifunctional protein FolD from Teredinibacter turnerae (strain ATCC 39867 / T7901).